The chain runs to 512 residues: Serine--tRNA ligase, cytoplasmic (512 aa).

At Met1 the chain carries N-acetylmethionine. An interaction with tRNA region spans residues Arg9 to Ser61. Ser241 is modified (phosphoserine). L-serine contacts are provided by Thr271 and Arg302. ATP is bound by residues Arg302–Glu304 and Val318–Phe321. The residue at position 323 (Lys323) is an N6-acetyllysine. Position 325 (Glu325) interacts with L-serine. ATP is bound at residue Glu391 to Ser394. Residues Asn427 and Thr429 each coordinate L-serine. The tract at residues Lys472–Ala512 is disordered. Positions Glu479–Thr499 are enriched in basic and acidic residues. The short motif at Lys482–Lys494 is the Nuclear localization signal element. A compositionally biased stretch (polar residues) spans Leu500–Ala512.

Belongs to the class-II aminoacyl-tRNA synthetase family. Type-1 seryl-tRNA synthetase subfamily. As to quaternary structure, homodimer. The tRNA molecule may bind across the dimer. Interacts with SIRT2. Interacts with METTL6; interaction is required for the tRNA N(3)-methylcytidine methyltransferase activity of METTL6.

The protein localises to the cytoplasm. It is found in the nucleus. It carries out the reaction tRNA(Ser) + L-serine + ATP = L-seryl-tRNA(Ser) + AMP + diphosphate + H(+). The enzyme catalyses tRNA(Sec) + L-serine + ATP = L-seryl-tRNA(Sec) + AMP + diphosphate + H(+). The protein operates within aminoacyl-tRNA biosynthesis; selenocysteinyl-tRNA(Sec) biosynthesis; L-seryl-tRNA(Sec) from L-serine and tRNA(Sec): step 1/1. Its function is as follows. Catalyzes the attachment of serine to tRNA(Ser) in a two-step reaction: serine is first activated by ATP to form Ser-AMP and then transferred to the acceptor end of tRNA(Ser). Is probably also able to aminoacylate tRNA(Sec) with serine, to form the misacylated tRNA L-seryl-tRNA(Sec), which will be further converted into selenocysteinyl-tRNA(Sec). In the nucleus, binds to the VEGFA core promoter and prevents MYC binding and transcriptional activation by MYC. Recruits SIRT2 to the VEGFA promoter, promoting deacetylation of histone H4 at 'Lys-16' (H4K16). Thereby, inhibits the production of VEGFA and sprouting angiogenesis mediated by VEGFA. The sequence is that of Serine--tRNA ligase, cytoplasmic (SARS1) from Cricetulus griseus (Chinese hamster).